A 130-amino-acid polypeptide reads, in one-letter code: Trypsin inhibitor (130 aa).

The tract at residues 27–49 (LHKQARQSGSGPSPQGPQQRPPL) is disordered. The span at 32-49 (RQSGSGPSPQGPQQRPPL) shows a compositional bias: low complexity.

This sequence belongs to the 2S seed storage albumins family. As to quaternary structure, the protein consists of two chains linked by disulfide bonds.

Functionally, inhibits trypsin with a Ki of 7 x 10(-6) M. This chain is Trypsin inhibitor, found in Mutarda arvensis (Charlock mustard).